The chain runs to 633 residues: Peptidoglycan D,D-transpeptidase MrdA (633 aa).

The helical transmembrane segment at 22 to 42 threads the bilayer; that stretch reads LVAFLGILLLTGVLIANLYNL. Ser-330 acts as the Acyl-ester intermediate in catalysis.

Belongs to the transpeptidase family. MrdA subfamily.

The protein resides in the cell inner membrane. The catalysed reaction is Preferential cleavage: (Ac)2-L-Lys-D-Ala-|-D-Ala. Also transpeptidation of peptidyl-alanyl moieties that are N-acyl substituents of D-alanine.. Its pathway is cell wall biogenesis; peptidoglycan biosynthesis. In terms of biological role, catalyzes cross-linking of the peptidoglycan cell wall. The chain is Peptidoglycan D,D-transpeptidase MrdA from Escherichia coli O157:H7.